A 199-amino-acid chain; its full sequence is MNAPRSLDELINALRCLPGVGPRSAQRMAYHLLQRDQEGARRLADSLDYALEHVRHCEKCNNFTEEVVCELCSSQRRDPALLCVVEMPADLLMMEQAHCYKGMYFVLMGRLSPLDGIGPREINLDRLLKRARDNMVKEVILATNFTVEGEATAHYIGEMLQNEGLKITRIARGLPVGGELEHVDSGTLAQAVLERREVK.

The C4-type zinc-finger motif lies at 57-72 (CEKCNNFTEEVVCELC). A Toprim domain is found at 80-175 (ALLCVVEMPA…KITRIARGLP (96 aa)).

It belongs to the RecR family.

Functionally, may play a role in DNA repair. It seems to be involved in an RecBC-independent recombinational process of DNA repair. It may act with RecF and RecO. The polypeptide is Recombination protein RecR (Nitrosospira multiformis (strain ATCC 25196 / NCIMB 11849 / C 71)).